Consider the following 640-residue polypeptide: 1,4-alpha-glucan branching enzyme GlgB (640 aa).

D317 functions as the Nucleophile in the catalytic mechanism. E370 serves as the catalytic Proton donor.

This sequence belongs to the glycosyl hydrolase 13 family. GlgB subfamily. As to quaternary structure, monomer.

It catalyses the reaction Transfers a segment of a (1-&gt;4)-alpha-D-glucan chain to a primary hydroxy group in a similar glucan chain.. The protein operates within glycan biosynthesis; glycogen biosynthesis. Its function is as follows. Catalyzes the formation of the alpha-1,6-glucosidic linkages in glycogen by scission of a 1,4-alpha-linked oligosaccharide from growing alpha-1,4-glucan chains and the subsequent attachment of the oligosaccharide to the alpha-1,6 position. The protein is 1,4-alpha-glucan branching enzyme GlgB of Nitratidesulfovibrio vulgaris (strain ATCC 29579 / DSM 644 / CCUG 34227 / NCIMB 8303 / VKM B-1760 / Hildenborough) (Desulfovibrio vulgaris).